Here is a 167-residue protein sequence, read N- to C-terminus: Mediator of RNA polymerase II transcription subunit 10 (167 aa).

Residues 53–88 form a disordered region; the sequence is LSTHTKPQPPSQDEEQKEKQDDTPEGSANDPLLRDI.

Belongs to the Mediator complex subunit 10 family. In terms of assembly, component of the Mediator complex.

It localises to the nucleus. Functionally, component of the Mediator complex, a coactivator involved in the regulated transcription of nearly all RNA polymerase II-dependent genes. Mediator functions as a bridge to convey information from gene-specific regulatory proteins to the basal RNA polymerase II transcription machinery. Mediator is recruited to promoters by direct interactions with regulatory proteins and serves as a scaffold for the assembly of a functional preinitiation complex with RNA polymerase II and the general transcription factors. The sequence is that of Mediator of RNA polymerase II transcription subunit 10 (nut2) from Neosartorya fischeri (strain ATCC 1020 / DSM 3700 / CBS 544.65 / FGSC A1164 / JCM 1740 / NRRL 181 / WB 181) (Aspergillus fischerianus).